We begin with the raw amino-acid sequence, 291 residues long: Nucleotide-binding protein Lm4b_02443 (291 aa).

13–20 (GMSGAGKT) contacts ATP. 63–66 (DLRG) lines the GTP pocket.

Belongs to the RapZ-like family.

Its function is as follows. Displays ATPase and GTPase activities. This is Nucleotide-binding protein Lm4b_02443 from Listeria monocytogenes serotype 4b (strain CLIP80459).